The sequence spans 261 residues: MIETYNQPVPRSAATGPPVSMKIFMYLLTVFLITQMIGSALFAVYLHRRLDKIEDERNLHEDFVFMKTIQRCNTGERSLSLLNCEEIKSQFEGFVKDIMLNKEEKKKENSFEMQKGDQNPQIAAHVISEASSKTTSVLQWAEKGYYTMSNNLVTLENGKQLTVKRQGLYYIYAQVTFCSNREASSQAPFIASLCLKPPNRFERILLRAANTHSSAKPCGQQSIHLGGIFELQPGASVFVNVTDPSQVSHGTGFTSFGLLKL.

Residues Met-1–Lys-22 are Cytoplasmic-facing. Residues Ile-23–Ala-43 traverse the membrane as a helical; Signal-anchor for type II membrane protein segment. Residues Val-44 to Leu-261 are Extracellular-facing. Residues Ile-122 to Leu-261 form the THD domain. A disulfide bridge links Cys-178 with Cys-218. Residue Asn-240 is glycosylated (N-linked (GlcNAc...) asparagine).

It belongs to the tumor necrosis factor family. As to quaternary structure, homotrimer. Interacts with CD28. CD40 ligand, soluble form: Exists as either a monomer or a homotrimer. Forms a ternary complex between CD40 and integrins for CD40-CD40LG signaling. In terms of processing, the soluble form derives from the membrane form by proteolytic processing.

It localises to the cell membrane. The protein resides in the cell surface. The protein localises to the secreted. Its function is as follows. Cytokine that acts as a ligand to CD40/TNFRSF5. Costimulates T-cell proliferation and cytokine production. Its cross-linking on T-cells generates a costimulatory signal which enhances the production of IL4 and IL10 in conjunction with the TCR/CD3 ligation and CD28 costimulation. Induces the activation of NF-kappa-B. Induces the activation of kinases MAPK8 and PAK2 in T-cells. Mediates B-cell proliferation in the absence of co-stimulus as well as IgE production in the presence of IL4. Involved in immunoglobulin class switching. In terms of biological role, acts as a ligand for integrins, specifically ITGA5:ITGB1 and ITGAV:ITGB3; both integrins and the CD40 receptor are required for activation of CD40-CD40LG signaling, which have cell-type dependent effects, such as B-cell activation, NF-kappa-B signaling and anti-apoptotic signaling. This chain is CD40 ligand (CD40LG), found in Callithrix jacchus (White-tufted-ear marmoset).